Reading from the N-terminus, the 254-residue chain is Alcohol dehydrogenase (254 aa).

10-33 (FVAGLGGIGLDTSREIVKSGPKNL) contacts NAD(+). Ser-138 lines the substrate pocket. Residue Tyr-151 is the Proton acceptor of the active site.

It belongs to the short-chain dehydrogenases/reductases (SDR) family. In terms of assembly, homodimer.

It catalyses the reaction a primary alcohol + NAD(+) = an aldehyde + NADH + H(+). It carries out the reaction a secondary alcohol + NAD(+) = a ketone + NADH + H(+). This chain is Alcohol dehydrogenase (Adh), found in Drosophila adiastola (Fruit fly).